Reading from the N-terminus, the 630-residue chain is Internalin B (630 aa).

A signal peptide spans 1 to 30 (MKEKHNPRRKYCLISGLAIIFSLWIIIGNG). Positions 31 to 76 (AKVQAETITVPTPIKQIFSDDAFAETIKDNLKKKSVTDAVTQNELN) constitute an LRRNT domain. LRR repeat units lie at residues 75–97 (LNSI…IQYL), 98–121 (PNVT…NLKN), 123–141 (GWLF…LKDL), 142–163 (KKLK…LVHL), 164–187 (PQLE…RLTK), 189–207 (DTLS…LAGL), and 208–231 (TKLQ…GLKN). Residues 241 to 319 (ECLNKPINHQ…RFHGRVTQPL (79 aa)) are ig-like region. The region spanning 241–330 (ECLNKPINHQ…EVYTVSYDVD (90 aa)) is the LRRCT domain. A b repeat region region spans residues 320-392 (KEVYTVSYDV…TLYAVFKAET (73 aa)). 3 consecutive GW domains span residues 393–467 (TEKA…LDRY), 472–550 (YDKG…TFYK), and 553–630 (MEKP…RAQK). Residues 399–630 (LTRYVKYIRG…TKAANLRAQK (232 aa)) form a GW repeat region, necessary and sufficient for cell surface attachment, interacts with host C1QBP and with heparin region.

It belongs to the internalin family. In terms of assembly, interacts via its LRR repeats plus the Ig-like region with the extracellular portion (residues 25-741) of its receptor MET; MET can bind HGF, its endogenous ligand, and InlB simultaneously. Probably forms a dimer upon interaction with host MET, which subsequently allows dimerization of the host MET and subsequent host signaling; dimerization probably occurs via the convex surface of InlB. Prevention of dimerization does not block interaction with MET but prevents downstream action.

Its subcellular location is the secreted. It localises to the cytoplasm. The protein localises to the cell membrane. In terms of biological role, mediates the entry of L.monocytogenes into normally non-phagocytic mammalian host cells. Its host receptor is hepatocyte growth factor receptor (HGF receptor, a tyrosine kinase, MET) which is tyrosine-phosphorylated in response to InlB. Downstream targets MAPK1/MAPK3 (Erk1/2) and AKT are phosphorylated in response to InlB, which also causes cell colony scattering. Complement component 1 Q subcomponent-binding protein (gC1q-R, C1QBP) has been suggested to also act an InlB receptor, but this is less certain. Stimulation of Tyr-phosphorylation of MET by InlB is potentiated by the InlB GW domains and glycosaminoglycans such as heparin. In Listeria monocytogenes serovar 1/2a (strain ATCC BAA-679 / EGD-e), this protein is Internalin B (inlB).